The chain runs to 140 residues: L-fucose mutarotase (140 aa).

The Proton donor role is filled by histidine 22. Residues aspartate 30, arginine 107, and 129-131 each bind substrate; that span reads YGN.

The protein belongs to the RbsD / FucU family. FucU mutarotase subfamily. Homodecamer.

Its subcellular location is the cytoplasm. It catalyses the reaction alpha-L-fucose = beta-L-fucose. The protein operates within carbohydrate metabolism; L-fucose metabolism. Its function is as follows. Involved in the anomeric conversion of L-fucose. The sequence is that of L-fucose mutarotase from Citrobacter koseri (strain ATCC BAA-895 / CDC 4225-83 / SGSC4696).